Here is a 293-residue protein sequence, read N- to C-terminus: Pyridoxal 5'-phosphate synthase subunit PdxS (293 aa).

Residue aspartate 23 coordinates D-ribose 5-phosphate. Lysine 80 serves as the catalytic Schiff-base intermediate with D-ribose 5-phosphate. Residue glycine 152 participates in D-ribose 5-phosphate binding. Arginine 164 provides a ligand contact to D-glyceraldehyde 3-phosphate. Residues glycine 213 and 234-235 (GS) each bind D-ribose 5-phosphate.

This sequence belongs to the PdxS/SNZ family. In the presence of PdxT, forms a dodecamer of heterodimers.

It carries out the reaction aldehydo-D-ribose 5-phosphate + D-glyceraldehyde 3-phosphate + L-glutamine = pyridoxal 5'-phosphate + L-glutamate + phosphate + 3 H2O + H(+). The protein operates within cofactor biosynthesis; pyridoxal 5'-phosphate biosynthesis. Catalyzes the formation of pyridoxal 5'-phosphate from ribose 5-phosphate (RBP), glyceraldehyde 3-phosphate (G3P) and ammonia. The ammonia is provided by the PdxT subunit. Can also use ribulose 5-phosphate and dihydroxyacetone phosphate as substrates, resulting from enzyme-catalyzed isomerization of RBP and G3P, respectively. This Herpetosiphon aurantiacus (strain ATCC 23779 / DSM 785 / 114-95) protein is Pyridoxal 5'-phosphate synthase subunit PdxS.